Consider the following 62-residue polypeptide: UPF0291 protein CLM_2971 (62 aa).

It belongs to the UPF0291 family.

It is found in the cytoplasm. This chain is UPF0291 protein CLM_2971, found in Clostridium botulinum (strain Kyoto / Type A2).